The primary structure comprises 484 residues: Protein nucleotidyltransferase YdiU (484 aa).

Positions 87, 89, 90, 110, 122, 123, 173, and 180 each coordinate ATP. Asp249 serves as the catalytic Proton acceptor. Mg(2+) is bound by residues Asn250 and Asp259. Residue Asp259 coordinates ATP.

It belongs to the SELO family. The cofactor is Mg(2+). It depends on Mn(2+) as a cofactor.

The enzyme catalyses L-seryl-[protein] + ATP = 3-O-(5'-adenylyl)-L-seryl-[protein] + diphosphate. The catalysed reaction is L-threonyl-[protein] + ATP = 3-O-(5'-adenylyl)-L-threonyl-[protein] + diphosphate. It catalyses the reaction L-tyrosyl-[protein] + ATP = O-(5'-adenylyl)-L-tyrosyl-[protein] + diphosphate. It carries out the reaction L-histidyl-[protein] + UTP = N(tele)-(5'-uridylyl)-L-histidyl-[protein] + diphosphate. The enzyme catalyses L-seryl-[protein] + UTP = O-(5'-uridylyl)-L-seryl-[protein] + diphosphate. The catalysed reaction is L-tyrosyl-[protein] + UTP = O-(5'-uridylyl)-L-tyrosyl-[protein] + diphosphate. Functionally, nucleotidyltransferase involved in the post-translational modification of proteins. It can catalyze the addition of adenosine monophosphate (AMP) or uridine monophosphate (UMP) to a protein, resulting in modifications known as AMPylation and UMPylation. In Alcanivorax borkumensis (strain ATCC 700651 / DSM 11573 / NCIMB 13689 / SK2), this protein is Protein nucleotidyltransferase YdiU.